Reading from the N-terminus, the 1578-residue chain is FH1/FH2 domain-containing protein 3 (1578 aa).

One can recognise a GBD/FH3 domain in the interval Asn-18–Glu-405. Disordered stretches follow at residues His-324 to Pro-518, Ser-535 to Gly-824, Val-915 to Ser-942, Leu-979 to Pro-1013, Gln-1418 to Asp-1462, Arg-1490 to Thr-1514, and Ser-1528 to Ala-1565. Phosphoserine occurs at positions 345 and 376. Residues Ile-368–Ser-383 are compositionally biased toward polar residues. Residues Glu-399 to Ala-425 are compositionally biased toward acidic residues. A Phosphothreonine modification is found at Thr-413. A compositionally biased stretch (low complexity) spans Ala-434 to Asp-446. A compositionally biased stretch (polar residues) spans Ala-453–Ala-473. The span at Ser-553–Gln-583 shows a compositional bias: low complexity. Over residues Asp-584 to Arg-598 the composition is skewed to polar residues. Positions Phe-597–Arg-645 form a coiled coil. The segment covering Gln-599–Tyr-651 has biased composition (basic and acidic residues). Low complexity-rich tracts occupy residues Asp-675–Ala-684 and Ser-692–Gln-701. A compositionally biased stretch (acidic residues) spans Ser-751 to Pro-761. Residues Glu-762–Asn-782 are compositionally biased toward basic and acidic residues. A compositionally biased stretch (low complexity) spans Ser-784–Ser-793. The span at Leu-795–Ala-809 shows a compositional bias: basic and acidic residues. At Ser-921 the chain carries Phosphoserine. Thr-933 carries the phosphothreonine modification. Residues Pro-985–Pro-1013 are compositionally biased toward pro residues. The region spanning Pro-985 to Pro-1016 is the FH1 domain. An FH2 domain is found at Gly-1039–Lys-1435. Residues Lys-1420–Gly-1434 show a composition bias toward basic residues. Over residues Ser-1444 to Gly-1456 the composition is skewed to low complexity. The DAD domain occupies Asp-1515 to Ala-1547. Positions Glu-1541 to Leu-1556 are enriched in basic residues.

The protein belongs to the formin homology family. In terms of assembly, interacts with nestin/NES-based interfilament (IF). Interacts with SQSTM1. Expressed in the heart, including left ventricle, kidney, brain and skeletal muscle, including soleus and tibialis anterior (at protein level).

It localises to the cytoplasm. The protein resides in the cytoskeleton. It is found in the myofibril. The protein localises to the sarcomere. Its subcellular location is the z line. Functionally, may play a role in actin filament polymerization in cardiomyocytes. Actin-organizing protein that may cause stress fiber formation together with cell elongation. This is FH1/FH2 domain-containing protein 3 (Fhod3) from Mus musculus (Mouse).